A 265-amino-acid chain; its full sequence is Arcelin-1 (265 aa).

The first 21 residues, 1–21 (MASSNLLTLALFLVLLTHANS), serve as a signal peptide directing secretion. Residues asparagine 33, asparagine 89, and asparagine 128 are each glycosylated (N-linked (GlcNAc...) asparagine). Cysteine 165 and cysteine 201 are oxidised to a cystine.

The protein belongs to the leguminous lectin family. As to quaternary structure, homodimer.

Its function is as follows. Seed storage. This carbohydrate-binding lectin has toxic effects on an important bean bruchid pest, Z.subfasciatus. Antibiosis properties of legume lectins are proposed to be due to the lysis of epithelial cells of the intestine by binding to the carbohydrate moieties of these proteins. The chain is Arcelin-1 (ARC1) from Phaseolus vulgaris (Kidney bean).